A 176-amino-acid chain; its full sequence is Small ribosomal subunit protein uS5 (176 aa).

The region spanning 11 to 74 is the S5 DRBM domain; sequence LSEVLVDVNR…QAAKKRMMKV (64 aa).

This sequence belongs to the universal ribosomal protein uS5 family. Part of the 30S ribosomal subunit. Contacts proteins S4 and S8.

In terms of biological role, with S4 and S12 plays an important role in translational accuracy. Located at the back of the 30S subunit body where it stabilizes the conformation of the head with respect to the body. The protein is Small ribosomal subunit protein uS5 of Rickettsia peacockii (strain Rustic).